We begin with the raw amino-acid sequence, 532 residues long: Glucan synthesis regulatory protein (532 aa).

Residues 374 to 532 (TANKRKSMAP…DAEDMKDIEI (159 aa)) form a disordered region. The segment covering 381 to 393 (MAPSMASASGMRS) has biased composition (low complexity). Residues 447 to 457 (PTTSLTASNAS) are compositionally biased toward polar residues. A compositionally biased stretch (basic and acidic residues) spans 475 to 516 (SGEHSKEDIKVNEDSPAKERTSEDKEKKPETEANGKATESKG).

Belongs to the KNR4/SMI1 family.

Functionally, involved in the regulation of 1,3-beta-glucan synthase activity and cell-wall formation. In Neurospora crassa (strain ATCC 24698 / 74-OR23-1A / CBS 708.71 / DSM 1257 / FGSC 987), this protein is Glucan synthesis regulatory protein (cot-2).